Reading from the N-terminus, the 158-residue chain is MSANRIAVLRGDNVSGIIRFKQEKEGSPTTISGEIKGLTPGLHGFHVHQYGDTTNGCISAGPHFNPYNKTHGGPTDEMRHVGDLGNIVAGADGTAHIDISDKHVQLLGPNSIIGRSLVVHADQDDLGKGVGDKKDESLKTGNAGARVACGIVAVSAAS.

Residues histidine 46, histidine 48, and histidine 63 each coordinate Cu cation. Cysteine 57 and cysteine 149 are oxidised to a cystine. Zn(2+) is bound by residues histidine 63, histidine 71, histidine 80, and aspartate 83. Histidine 120 is a binding site for Cu cation.

Belongs to the Cu-Zn superoxide dismutase family. As to quaternary structure, homodimer. It depends on Cu cation as a cofactor. Zn(2+) is required as a cofactor.

The protein resides in the cytoplasm. The enzyme catalyses 2 superoxide + 2 H(+) = H2O2 + O2. In terms of biological role, destroys radicals which are normally produced within the cells and which are toxic to biological systems. This is Superoxide dismutase [Cu-Zn] (SODC) from Brugia pahangi (Filarial nematode worm).